Reading from the N-terminus, the 207-residue chain is 5-nitrosalicylic acid 1,2-dioxygenase (207 aa).

Residues 85 to 151 (QLIHPGEEVT…GDKDTLMYVI (67 aa)) enclose the Cupin type-2 domain.

The catalysed reaction is 5-nitrosalicylate + O2 = 2-oxo-3-(5-oxofuran-2-ylidene)propanoate + nitrite + H(+). In terms of biological role, dioxygenase that catalyzes the cleavage of the aromatic ring of 5-nitrosalicylate (5NSA) without prior removal of the nitro group in biodegradation of 5-nitroanthranilate. The chain is 5-nitrosalicylic acid 1,2-dioxygenase (naaB) from Bradyrhizobium sp.